We begin with the raw amino-acid sequence, 587 residues long: Zinc finger protein 496 (587 aa).

The disordered stretch occupies residues 1 to 40 (MPTALCPRVLAPKESEEPRKMRSPPGENPSPQGELPSPES). Basic and acidic residues predominate over residues 11 to 20 (APKESEEPRK). Lysine 13 participates in a covalent cross-link: Glycyl lysine isopeptide (Lys-Gly) (interchain with G-Cter in SUMO2). Positions 42–124 (RRLFRRFRYQ…AAVEALEREP (83 aa)) constitute an SCAN box domain. Serine 185 bears the Phosphoserine mark. Positions 221–291 (SPFKDMILCF…ELQDLQGKEV (71 aa)) constitute a KRAB domain. The tract at residues 260–282 (PPNDLAAQPDLSQGEENEPRVPE) is disordered. Serine 299 is modified (phosphoserine). Positions 358–399 (SSSGDEDSQHGPYCTEELGSPTEKQRSLPASHRSSTEAGGEV) are disordered. A compositionally biased stretch (polar residues) spans 389–399 (HRSSTEAGGEV). A Glycyl lysine isopeptide (Lys-Gly) (interchain with G-Cter in SUMO2) cross-link involves residue lysine 403. The C2H2-type 1; degenerate zinc-finger motif lies at 406–428 (YVCPNCGKIFRWRVNFIRHLRSR). C2H2-type zinc fingers lie at residues 435-457 (HECS…LESH) and 463-485 (YRCG…RRIH). Residues 488–513 (PDRLQPVEKREQAASEDADKGPKEPL) form a disordered region. Lysine 496 is covalently cross-linked (Glycyl lysine isopeptide (Lys-Gly) (interchain with G-Cter in SUMO2)). 2 consecutive C2H2-type zinc fingers follow at residues 522 to 545 (FQCC…SHFH) and 553 to 575 (FQCR…ERLH).

It belongs to the krueppel C2H2-type zinc-finger protein family. As to quaternary structure, interacts (via zinc-fingers) with JARID2. Interacts with NSD1.

It localises to the nucleus. Functionally, DNA-binding transcription factor that can both act as an activator and a repressor. The polypeptide is Zinc finger protein 496 (ZNF496) (Homo sapiens (Human)).